Consider the following 616-residue polypeptide: Chaperone protein HscA (616 aa).

It belongs to the heat shock protein 70 family.

In terms of biological role, chaperone involved in the maturation of iron-sulfur cluster-containing proteins. Has a low intrinsic ATPase activity which is markedly stimulated by HscB. Involved in the maturation of IscU. The polypeptide is Chaperone protein HscA (Escherichia coli (strain SMS-3-5 / SECEC)).